The sequence spans 95 residues: Ubiquinol-cytochrome-c reductase complex assembly factor 3 (95 aa).

Over 1–7 (MTTLRKL) the chain is Mitochondrial matrix. A helical transmembrane segment spans residues 8–28 (LLVGALLGAGAGVGTALFALV). Residues 23–80 (ALFALVTPGEERKQAMLKEMPEQYPQRRDEAARTKELLLATLQEAAATQENVAWRKNW) are mediates lipid-binding. The Mitochondrial intermembrane segment spans residues 29 to 95 (TPGEERKQAM…GGGGGGGRSA (67 aa)).

The protein belongs to the UQCC3 family. In terms of assembly, associates with the ubiquinol-cytochrome c reductase complex (mitochondrial respiratory chain complex III(CIII) or cytochrome b-c1 complex). Interacts with UQCC1. Forms a complex, named COMC, composed of UQCC1, UQCC2; UQCC3 and UQCC4; mediates MT-CYB hemylation and association with the first nuclear-encoded complex III subunit UQCRQ. In terms of processing, probably cleaved by OMA1 under mitochondrial stress conditions.

It is found in the mitochondrion inner membrane. Functionally, required for the assembly of the ubiquinol-cytochrome c reductase complex (mitochondrial respiratory chain complex III or cytochrome b-c1 complex), mediating cytochrome b recruitment and probably stabilization within the complex. Thereby, plays an important role in ATP production by mitochondria. Cardiolipin-binding protein, it may also control the cardiolipin composition of mitochondria membranes and their morphology. The polypeptide is Ubiquinol-cytochrome-c reductase complex assembly factor 3 (Bos taurus (Bovine)).